The following is a 512-amino-acid chain: Probable cytosol aminopeptidase (512 aa).

2 residues coordinate Mn(2+): lysine 284 and aspartate 289. Lysine 296 is an active-site residue. 3 residues coordinate Mn(2+): aspartate 307, aspartate 366, and glutamate 368. Arginine 370 is an active-site residue.

The protein belongs to the peptidase M17 family. Mn(2+) serves as cofactor.

It localises to the cytoplasm. It carries out the reaction Release of an N-terminal amino acid, Xaa-|-Yaa-, in which Xaa is preferably Leu, but may be other amino acids including Pro although not Arg or Lys, and Yaa may be Pro. Amino acid amides and methyl esters are also readily hydrolyzed, but rates on arylamides are exceedingly low.. The catalysed reaction is Release of an N-terminal amino acid, preferentially leucine, but not glutamic or aspartic acids.. In terms of biological role, presumably involved in the processing and regular turnover of intracellular proteins. Catalyzes the removal of unsubstituted N-terminal amino acids from various peptides. The polypeptide is Probable cytosol aminopeptidase (Cupriavidus necator (strain ATCC 17699 / DSM 428 / KCTC 22496 / NCIMB 10442 / H16 / Stanier 337) (Ralstonia eutropha)).